The chain runs to 335 residues: uncharacterized protein (335 aa).

Residue 28–35 coordinates ATP; that stretch reads GPINSGKT.

This sequence belongs to the archaeal ATPase family.

This is an uncharacterized protein from Pyrococcus abyssi (strain GE5 / Orsay).